Reading from the N-terminus, the 276-residue chain is tRNA dimethylallyltransferase (276 aa).

Positions 9-12 are interaction with substrate tRNA; sequence DSLS.

This sequence belongs to the IPP transferase family. In terms of assembly, monomer. Mg(2+) serves as cofactor.

The catalysed reaction is adenosine(37) in tRNA + dimethylallyl diphosphate = N(6)-dimethylallyladenosine(37) in tRNA + diphosphate. Its function is as follows. Catalyzes the transfer of a dimethylallyl group onto the adenine at position 37 in tRNAs that read codons beginning with uridine, leading to the formation of N6-(dimethylallyl)adenosine (i(6)A). The chain is tRNA dimethylallyltransferase (miaA) from Helicobacter pylori (strain HPAG1).